Reading from the N-terminus, the 384-residue chain is Ribosomal RNA small subunit methyltransferase H (384 aa).

S-adenosyl-L-methionine-binding positions include 99–101, Asp-118, Tyr-145, Asp-169, and Gln-176; that span reads GGH.

It belongs to the methyltransferase superfamily. RsmH family.

The protein localises to the cytoplasm. It catalyses the reaction cytidine(1402) in 16S rRNA + S-adenosyl-L-methionine = N(4)-methylcytidine(1402) in 16S rRNA + S-adenosyl-L-homocysteine + H(+). Specifically methylates the N4 position of cytidine in position 1402 (C1402) of 16S rRNA. This chain is Ribosomal RNA small subunit methyltransferase H, found in Mycobacteroides abscessus (strain ATCC 19977 / DSM 44196 / CCUG 20993 / CIP 104536 / JCM 13569 / NCTC 13031 / TMC 1543 / L948) (Mycobacterium abscessus).